The sequence spans 938 residues: E3 ubiquitin-protein ligase CBL-B (938 aa).

Residues 35-167 (PPKQAAADRR…KAIFPNGQFQ (133 aa)) form a 4H region. The Cbl-PTB domain occupies 35–343 (PPKQAAADRR…GRSYNPDLTG (309 aa)). An EF-hand-like region spans residues 168 to 240 (GDNFRITKAD…FEFDIFTRLF (73 aa)). Ca(2+) is bound by residues aspartate 221, threonine 223, asparagine 225, tyrosine 227, and glutamate 232. Positions 241–343 (QPWGSILRNW…GRSYNPDLTG (103 aa)) are SH2-like. Serine 282 carries the post-translational modification Phosphoserine; by PKC/PRKCQ. Arginine 286 lines the 4-O-phospho-L-tyrosine pocket. The linker stretch occupies residues 344–372 (LCEPTPHDHIKVTQEQYELYCEMGSTFQL). Tyrosine 363 is modified (phosphotyrosine). The RING-type zinc-finger motif lies at 373–412 (CKICAENDKDVKIEPCGHLMCTSCLTAWQESDGQGCPFCR). Residues 465 to 588 (ASVRKCTDRQ…SVPSRDQPMP (124 aa)) are disordered. Residues 473–486 (RQNSPVTSPGSSPL) show a composition bias toward polar residues. A phosphoserine mark is found at serine 476, serine 480, serine 484, serine 521, serine 525, and serine 529. Residues 543–567 (PLPAPPPPLRDPPPPPERPPPIPPD) are interaction with VAV1. Over residues 544–566 (LPAPPPPLRDPPPPPERPPPIPP) the composition is skewed to pro residues. Residue serine 633 is modified to Phosphoserine. Phosphotyrosine occurs at positions 664 and 708. 2 disordered regions span residues 702 to 725 (EEDD…PSHC) and 771 to 885 (DALP…EAAL). Polar residues predominate over residues 714–724 (HPVSLNSQPSH). Over residues 775–784 (PSLPPPPPPA) the composition is skewed to pro residues. The span at 794–804 (PPGSSSRPSSG) shows a compositional bias: low complexity. Over residues 839 to 855 (NRASQDYDQLPSSSDGS) the composition is skewed to polar residues. A Phosphotyrosine modification is found at tyrosine 845. The tract at residues 847–883 (QLPSSSDGSQAPARPPKPRPRRTAPEIHHRKPHGPEA) is interaction with SH3KBP1. Residues 862–878 (PKPRPRRTAPEIHHRKP) are compositionally biased toward basic residues. The 40-residue stretch at 887–926 (NVDAKIAKLMGEGYAFEEVKRALEIAQNNLEVARSILREF) folds into the UBA domain.

As to quaternary structure, interacts with SH3 domain-containing proteins LCK, CRK and SORBS1. Interacts with LCP2 and ZAP70. Interacts with CBL. Interacts with SH3 domain-containing proteins VAV1, FYN, FGR, PLCG1, GRB2, CRKL, PIK3R1 and SH3KBP1/CIN85. Identified in heterotrimeric complexes with SH3KBP1/CIN85, CD2AP and ARHGEF7, where one CBLB peptide binds two copies of the other protein. Interacts with poly-ubiquitinated proteins. Dimerization is required for the binding of poly-ubiquitin, but not for the binding of mono-ubiquitin. Interacts with EGFR (phosphorylated). Interacts with IFT20. Post-translationally, phosphorylated on tyrosine and serine residues upon TCR or BCR activation, and upon various types of cell stimulation. Auto-ubiquitinated upon EGF-mediated cell activation or upon T-cell costimulation by CD28; which promotes proteasomal degradation.

The protein localises to the cytoplasm. It catalyses the reaction S-ubiquitinyl-[E2 ubiquitin-conjugating enzyme]-L-cysteine + [acceptor protein]-L-lysine = [E2 ubiquitin-conjugating enzyme]-L-cysteine + N(6)-ubiquitinyl-[acceptor protein]-L-lysine.. The protein operates within protein modification; protein ubiquitination. Functionally, E3 ubiquitin-protein ligase which accepts ubiquitin from specific E2 ubiquitin-conjugating enzymes, and transfers it to substrates, generally promoting their degradation by the proteasome. Negatively regulates TCR (T-cell receptor), BCR (B-cell receptor) and FCER1 (high affinity immunoglobulin epsilon receptor) signal transduction pathways. In naive T-cells, inhibits VAV1 activation upon TCR engagement and imposes a requirement for CD28 costimulation for proliferation and IL-2 production. Also acts by promoting PIK3R1/p85 ubiquitination, which impairs its recruitment to the TCR and subsequent activation. In activated T-cells, inhibits PLCG1 activation and calcium mobilization upon restimulation and promotes anergy. In B-cells, acts by ubiquitinating SYK and promoting its proteasomal degradation. Slightly promotes SRC ubiquitination. May be involved in EGFR ubiquitination and internalization. May be functionally coupled with the E2 ubiquitin-protein ligase UB2D3. In association with CBL, required for proper feedback inhibition of ciliary platelet-derived growth factor receptor-alpha (PDGFRA) signaling pathway via ubiquitination and internalization of PDGFRA. This Rattus norvegicus (Rat) protein is E3 ubiquitin-protein ligase CBL-B (Cblb).